Here is a 427-residue protein sequence, read N- to C-terminus: Interferon regulatory factor 3 (427 aa).

Threonine 3 is modified (phosphothreonine). A DNA-binding region (IRF tryptophan pentad repeat) is located at residues 5-111 (KPRILPWLVS…DPHKIYEFVN (107 aa)). At serine 14 the chain carries Phosphoserine. Threonine 75 bears the Phosphothreonine mark. Residues 91 to 107 (RLAEDRSKDPHDPHKIY) are compositionally biased toward basic and acidic residues. A disordered region spans residues 91-136 (RLAEDRSKDPHDPHKIYEFVNSGVGDFSQPDTSPDTNGGGSTSDTQ). Serine 97 and serine 123 each carry phosphoserine. The Nuclear export signal motif lies at 139 to 149 (ILDELLGNMVL). The segment at 141–427 (DELLGNMVLA…GMDFQGPGES (287 aa)) is mediates interaction with ZDHHC11. Residue serine 175 is modified to (Microbial infection) Phosphoserine. Threonine 180 carries the post-translational modification Phosphothreonine. Phosphoserine is present on serine 188. Residue lysine 193 forms a Glycyl lysine isopeptide (Lys-Gly) (interchain with G-Cter in ISG15) linkage. Residues 200-360 (EEWEFEVTAF…SWPQDQPWTK (161 aa)) are interaction with HERC5. Phosphothreonine occurs at positions 237, 244, and 253. Cysteine 267 and cysteine 289 are joined by a disulfide. Glycyl lysine isopeptide (Lys-Gly) (interchain with G-Cter in ISG15) cross-links involve residues lysine 360 and lysine 366. At lysine 366 the chain carries N6-acetyllysine. Serine 385 is modified (phosphoserine). Serine 386 is modified (diphosphoserine). Serine 386 carries the phosphoserine; by TBK1 modification. A Phosphoserine; by IKKE and TBK1 modification is found at serine 396. Serine 398 is modified (phosphoserine). Threonine 404 is modified (phosphothreonine). Serine 427 carries the phosphoserine modification.

This sequence belongs to the IRF family. Monomer. Homodimer; phosphorylation-induced. Interacts (when phosphorylated) with CREBBP. Interacts with MAVS (via phosphorylated pLxIS motif). Interacts with TICAM1 (via phosphorylated pLxIS motif). Interacts with STING1 (via phosphorylated pLxIS motif). Interacts with IKBKE and TBK1. Interacts with TICAM2. Interacts with RBCK1. Interacts with HERC5. Interacts with DDX3X (phosphorylated at 'Ser-102'); the interaction allows the phosphorylation and activation of IRF3 by IKBKE. Interacts with TRIM21 and ULK1, in the presence of TRIM21; this interaction leads to IRF3 degradation by autophagy. Interacts with RIOK3; RIOK3 probably mediates the interaction of TBK1 with IRF3. Interacts with ILRUN; the interaction inhibits IRF3 binding to its DNA consensus sequence. Interacts with LYAR; this interaction impairs IRF3 DNA-binding activity. Interacts with TRAF3. Interacts with ZDHHC11; ZDHHC11 recruits IRF3 to STING1 upon DNA virus infection and thereby promotes IRF3 activation. Interacts with HSP90AA1; the interaction mediates IRF3 association with TOMM70. Interacts with BCL2; the interaction decreases upon Sendai virus infection. Interacts with BAX; the interaction is direct, increases upon Sendai virus infection and mediates the formation of the apoptosis complex TOMM70:HSP90AA1:IRF3:BAX. Interacts with DDX56. Interacts with NBR1. As to quaternary structure, (Microbial infection) Interacts with rotavirus A NSP1 (via pLxIS motif); this interaction leads to the proteasome-dependent degradation of IRF3. In terms of assembly, (Microbial infection) Interacts with herpes virus 8/HHV-8 protein VIRF1. (Microbial infection) Interacts with Seneca Valley virus protease 3C; this interaction is involved in the suppression of IRF3 expression and phosphorylation by the virus. As to quaternary structure, (Microbial infection) Interacts with herpes virus 2/HHV-2 protein ICP27; this interaction inhibits IRF3 phosphorylation and nuclear translocation. In terms of assembly, (Microbial infection) Interacts with human cytomegalovirus protein UL44; this interaction prevents IRF3 binding to its promoters. (Microbial infection) Interacts with the two fragments of MERS-COV protein N produced by CASP6 through proteolytic cleavage; both interactions inhibit IRF3 nuclear translocation after activation and IFN signaling. Constitutively phosphorylated on many Ser/Thr residues. Activated following phosphorylation by TBK1 and IKBKE. Innate adapter proteins, such as MAVS, STING1 or TICAM1, are first activated by viral RNA, cytosolic DNA, and bacterial lipopolysaccharide (LPS), respectively, leading to activation of the kinases TBK1 and IKBKE. These kinases then phosphorylate the adapter proteins on the pLxIS motif, leading to recruitment of IRF3, thereby licensing IRF3 for phosphorylation by TBK1. Phosphorylation at Ser-386 is followed by pyrophosphorylation at the same residue, promoting phosphorylation at Ser-396. Phosphorylated IRF3 dissociates from the adapter proteins, dimerizes, and then enters the nucleus to induce IFNs. In terms of processing, pyrophosphorylated by UAP1 following phosphorylation at Ser-386 by TBK1. Pyrophosphorylation promotes subsequent phosphorylation at Ser-396, leading to homodimerization of IRF3. Post-translationally, acetylation at Lys-366 by KAT8 inhibits recruimtent to promoters and transcription factor activity. Acetylation by KAT8 is promoted by phosphorylation at Ser-396. Ubiquitinated; ubiquitination involves RBCK1 leading to proteasomal degradation. Polyubiquitinated; ubiquitination involves TRIM21 leading to proteasomal degradation. Ubiquitinated by UBE3C, leading to its degradation. Deubiquitinated by USP5 on both 'Lys-48'-linked unanchored and 'Lys-63'-linked anchored polyubiquitin, leading to inhibition of anti-RNA viral innate immunity. In terms of processing, ISGylated by HERC5 resulting in sustained IRF3 activation and in the inhibition of IRF3 ubiquitination by disrupting PIN1 binding. The phosphorylation state of IRF3 does not alter ISGylation. Post-translationally, proteolytically cleaved by apoptotic caspases during apoptosis, leading to its inactivation. Cleavage by CASP3 during virus-induced apoptosis inactivates it, preventing cytokine overproduction. (Microbial infection) ISGylated. ISGylation is cleaved and removed by SARS-COV-2 nsp3 which attenuates type I interferon responses. In terms of processing, (Microbial infection) Phosphorylation and subsequent activation of IRF3 is inhibited by vaccinia virus protein E3. Post-translationally, (Microbial infection) Phosphorylated by herpes simplex virus 1/HHV-1 US3 at Ser-175 to prevent IRF3 activation. Expressed constitutively in a variety of tissues.

The protein resides in the cytoplasm. Its subcellular location is the nucleus. The protein localises to the mitochondrion. With respect to regulation, in the absence of viral infection, maintained as a monomer in an autoinhibited state. Phosphorylation by TBK1 and IKBKE disrupts this autoinhibition leading to the liberation of the DNA-binding and dimerization activities and its nuclear localization where it can activate type I IFN and ISG genes. Phosphorylation and activation follow the following steps: innate adapter proteins, such as MAVS, STING1 or TICAM1, are first activated by viral RNA, cytosolic DNA and bacterial lipopolysaccharide (LPS), respectively, leading to activation of the kinases TBK1 and IKBKE. These kinases then phosphorylate the adapter proteins on their pLxIS motif, leading to recruitment of IRF3, thereby licensing IRF3 for phosphorylation by TBK1. Phosphorylated IRF3 dissociates from the adapter proteins, dimerizes, and then enters the nucleus to induce IFNs. Its activity is regulated as follows. (Microbial infection) Activated upon coronavirus SARS-CoV-2 infection. In terms of biological role, key transcriptional regulator of type I interferon (IFN)-dependent immune responses which plays a critical role in the innate immune response against DNA and RNA viruses. Regulates the transcription of type I IFN genes (IFN-alpha and IFN-beta) and IFN-stimulated genes (ISG) by binding to an interferon-stimulated response element (ISRE) in their promoters. Acts as a more potent activator of the IFN-beta (IFNB) gene than the IFN-alpha (IFNA) gene and plays a critical role in both the early and late phases of the IFNA/B gene induction. Found in an inactive form in the cytoplasm of uninfected cells and following viral infection, double-stranded RNA (dsRNA), or toll-like receptor (TLR) signaling, is phosphorylated by IKBKE and TBK1 kinases. This induces a conformational change, leading to its dimerization and nuclear localization and association with CREB binding protein (CREBBP) to form dsRNA-activated factor 1 (DRAF1), a complex which activates the transcription of the type I IFN and ISG genes. Can activate distinct gene expression programs in macrophages and can induce significant apoptosis in primary macrophages. In response to Sendai virus infection, is recruited by TOMM70:HSP90AA1 to mitochondrion and forms an apoptosis complex TOMM70:HSP90AA1:IRF3:BAX inducing apoptosis. Key transcription factor regulating the IFN response during SARS-CoV-2 infection. The sequence is that of Interferon regulatory factor 3 from Homo sapiens (Human).